We begin with the raw amino-acid sequence, 152 residues long: Large ribosomal subunit protein uL15 (152 aa).

The disordered stretch occupies residues G31 to M58.

Belongs to the universal ribosomal protein uL15 family. Part of the 50S ribosomal subunit.

Binds to the 23S rRNA. This chain is Large ribosomal subunit protein uL15, found in Parasynechococcus marenigrum (strain WH8102).